We begin with the raw amino-acid sequence, 316 residues long: Ribosomal RNA small subunit methyltransferase H (316 aa).

Residues 35–37 (SGH), Asp55, Phe84, Asp105, and Gln112 contribute to the S-adenosyl-L-methionine site.

This sequence belongs to the methyltransferase superfamily. RsmH family.

The protein localises to the cytoplasm. The catalysed reaction is cytidine(1402) in 16S rRNA + S-adenosyl-L-methionine = N(4)-methylcytidine(1402) in 16S rRNA + S-adenosyl-L-homocysteine + H(+). In terms of biological role, specifically methylates the N4 position of cytidine in position 1402 (C1402) of 16S rRNA. The sequence is that of Ribosomal RNA small subunit methyltransferase H from Streptococcus pyogenes serotype M49 (strain NZ131).